The sequence spans 192 residues: NADH-quinone oxidoreductase subunit C (192 aa).

A disordered region spans residues 170–192 (LGGIPVEYKGATVPPPDERRQYA).

The protein belongs to the complex I 30 kDa subunit family. As to quaternary structure, NDH-1 is composed of 14 different subunits. Subunits NuoB, C, D, E, F, and G constitute the peripheral sector of the complex.

It localises to the cell membrane. The catalysed reaction is a quinone + NADH + 5 H(+)(in) = a quinol + NAD(+) + 4 H(+)(out). NDH-1 shuttles electrons from NADH, via FMN and iron-sulfur (Fe-S) centers, to quinones in the respiratory chain. The immediate electron acceptor for the enzyme in this species is believed to be a menaquinone. Couples the redox reaction to proton translocation (for every two electrons transferred, four hydrogen ions are translocated across the cytoplasmic membrane), and thus conserves the redox energy in a proton gradient. This is NADH-quinone oxidoreductase subunit C from Acidothermus cellulolyticus (strain ATCC 43068 / DSM 8971 / 11B).